A 523-amino-acid polypeptide reads, in one-letter code: Probable FAD synthase (523 aa).

Positions 20 to 111 (AIVVIGDEIL…TDQLHFSDEI (92 aa)) are molybdenum cofactor biosynthesis protein-like. The tract at residues 332–489 (QIALSFNGGK…SLGGRDNTVK (158 aa)) is FAD synthase.

It in the N-terminal section; belongs to the MoaB/Mog family. In the C-terminal section; belongs to the PAPS reductase family. FAD1 subfamily. It depends on Mg(2+) as a cofactor.

It carries out the reaction FMN + ATP + H(+) = FAD + diphosphate. It participates in cofactor biosynthesis; FAD biosynthesis; FAD from FMN: step 1/1. In terms of biological role, catalyzes the adenylation of flavin mononucleotide (FMN) to form flavin adenine dinucleotide (FAD) coenzyme. This chain is Probable FAD synthase, found in Caenorhabditis briggsae.